Here is a 349-residue protein sequence, read N- to C-terminus: Beta-hexosaminidase (349 aa).

Residues aspartate 64, arginine 72, arginine 138, and 168–169 each bind substrate; that span reads KH. The active-site Proton donor/acceptor is histidine 181. The Nucleophile role is filled by aspartate 252.

This sequence belongs to the glycosyl hydrolase 3 family. NagZ subfamily.

It is found in the cytoplasm. The catalysed reaction is Hydrolysis of terminal non-reducing N-acetyl-D-hexosamine residues in N-acetyl-beta-D-hexosaminides.. Its pathway is cell wall biogenesis; peptidoglycan recycling. Functionally, plays a role in peptidoglycan recycling by cleaving the terminal beta-1,4-linked N-acetylglucosamine (GlcNAc) from peptide-linked peptidoglycan fragments, giving rise to free GlcNAc, anhydro-N-acetylmuramic acid and anhydro-N-acetylmuramic acid-linked peptides. In Nitrosospira multiformis (strain ATCC 25196 / NCIMB 11849 / C 71), this protein is Beta-hexosaminidase.